A 112-amino-acid chain; its full sequence is T cell receptor alpha variable 9-1 (112 aa).

The N-terminal stretch at 1–20 (MNSSPGPAIALFLMFGGING) is a signal peptide. The region spanning 21 to 112 (DSVVQTEGQV…DSAVYFCALS (92 aa)) is the Ig-like domain. Asn-41 carries N-linked (GlcNAc...) asparagine glycosylation. Residues Cys-42 and Cys-109 are joined by a disulfide bond.

In terms of assembly, alpha-beta TR is a heterodimer composed of an alpha and beta chain; disulfide-linked. The alpha-beta TR is associated with the transmembrane signaling CD3 coreceptor proteins to form the TR-CD3 (TcR or TCR). The assembly of alpha-beta TR heterodimers with CD3 occurs in the endoplasmic reticulum where a single alpha-beta TR heterodimer associates with one CD3D-CD3E heterodimer, one CD3G-CD3E heterodimer and one CD247 homodimer forming a stable octameric structure. CD3D-CD3E and CD3G-CD3E heterodimers preferentially associate with TR alpha and TR beta chains, respectively. The association of the CD247 homodimer is the last step of TcR assembly in the endoplasmic reticulum and is required for transport to the cell surface.

The protein localises to the cell membrane. In terms of biological role, v region of the variable domain of T cell receptor (TR) alpha chain that participates in the antigen recognition. Alpha-beta T cell receptors are antigen specific receptors which are essential to the immune response and are present on the cell surface of T lymphocytes. Recognize peptide-major histocompatibility (MH) (pMH) complexes that are displayed by antigen presenting cells (APC), a prerequisite for efficient T cell adaptive immunity against pathogens. Binding of alpha-beta TR to pMH complex initiates TR-CD3 clustering on the cell surface and intracellular activation of LCK that phosphorylates the ITAM motifs of CD3G, CD3D, CD3E and CD247 enabling the recruitment of ZAP70. In turn ZAP70 phosphorylates LAT, which recruits numerous signaling molecules to form the LAT signalosome. The LAT signalosome propagates signal branching to three major signaling pathways, the calcium, the mitogen-activated protein kinase (MAPK) kinase and the nuclear factor NF-kappa-B (NF-kB) pathways, leading to the mobilization of transcription factors that are critical for gene expression and essential for T cell growth and differentiation. The T cell repertoire is generated in the thymus, by V-(D)-J rearrangement. This repertoire is then shaped by intrathymic selection events to generate a peripheral T cell pool of self-MH restricted, non-autoaggressive T cells. Post-thymic interaction of alpha-beta TR with the pMH complexes shapes TR structural and functional avidity. The protein is T cell receptor alpha variable 9-1 of Homo sapiens (Human).